The following is a 54-amino-acid chain: Potassium channel toxin alpha-KTx 14.5 (54 aa).

Residues 1–23 (MKIFFAILLILAVCSMAIWTVNG) form the signal peptide. Disulfide bonds link cysteine 30–cysteine 46, cysteine 36–cysteine 51, and cysteine 40–cysteine 53.

This sequence belongs to the short scorpion toxin superfamily. Potassium channel inhibitor family. Alpha-KTx 14 subfamily. As to expression, expressed by the venom gland.

Its subcellular location is the secreted. In terms of biological role, inhibits potassium channels. May be active towards small conductance calcium-activated potassium channels (KCNN, SK), and less active towards voltage-gated potassium channels (Kv/KCN). The sequence is that of Potassium channel toxin alpha-KTx 14.5 from Mesobuthus gibbosus (Mediterranean checkered scorpion).